We begin with the raw amino-acid sequence, 468 residues long: Uronate isomerase (468 aa).

The protein belongs to the metallo-dependent hydrolases superfamily. Uronate isomerase family.

It carries out the reaction D-glucuronate = D-fructuronate. The catalysed reaction is aldehydo-D-galacturonate = keto-D-tagaturonate. It participates in carbohydrate metabolism; pentose and glucuronate interconversion. This Phocaeicola vulgatus (strain ATCC 8482 / DSM 1447 / JCM 5826 / CCUG 4940 / NBRC 14291 / NCTC 11154) (Bacteroides vulgatus) protein is Uronate isomerase.